Here is a 530-residue protein sequence, read N- to C-terminus: MSSLRPDEARKLATAASVSPLSNCQFCGVVISSIADEQKLEFTNKYKGSCTLLCSYDSQGVVLRVVSDDDRSHVLKEYMIAADTDAAQMGRRSYAVSLDADNLVLRFGSEQDQQLFRKVVENVKHLRPKSVFSQRTEESSASQYFQFYGYLSQQQNMMQDYVRTSTYQRAILGNAVDFQDKIVLDVGAGSGILSFFAVQAGAAKVYAIEASNMAQYAQQLVESNNVQHKISVIPGKIEEIELPEKVDVIISEPMGYMLYNERMLETYLHARKWLKPQGKMYPTHGDLHIAPFSDESLYSEQYNKANFWYQSAFHGVDLTTLHKEGMKEYFRQPIVDTFDIRICMAKSVRHVCDFLNDKEDDLHLISIPLEFHILQTGICHGLAFWFDVEFSGSSQNVWLSTSPTAPLTHWYQVRCLLPMPIFIKQGQTLTGRVLLEANRRQSYDVTIDLHIEGTLISSSNTLDLKNPYFRYTGAPVQAPPGTSTQSPSEQYWTQVDTQGSRNSSSMLNGGLSVNGIGDGMDITHGLMHPH.

One can recognise an SAM-dependent MTase PRMT-type domain in the interval A141–H450. Q154, R163, G187, E209, E238, and T266 together coordinate S-adenosyl-L-methionine. Position 501 is an asymmetric dimethylarginine; by autocatalysis (R501).

Belongs to the class I-like SAM-binding methyltransferase superfamily. Protein arginine N-methyltransferase family. As to quaternary structure, homodimer. The dimethylated protein is the major form.

It is found in the cytoplasm. It localises to the nucleus. It catalyses the reaction L-arginyl-[protein] + 2 S-adenosyl-L-methionine = N(omega),N(omega)-dimethyl-L-arginyl-[protein] + 2 S-adenosyl-L-homocysteine + 2 H(+). In terms of biological role, methylates (mono- and asymmetric dimethylation) the guanidino nitrogens of arginyl residues in proteins. May methylate histone H3 at 'Arg-17' and activate transcription via chromatin remodeling. The protein is Histone-arginine methyltransferase CARMER (Art4) of Drosophila simulans (Fruit fly).